Here is a 507-residue protein sequence, read N- to C-terminus: ATP synthase subunit alpha, chloroplastic (507 aa).

Position 170-177 (170-177 (GDRQTGKT)) interacts with ATP.

It belongs to the ATPase alpha/beta chains family. F-type ATPases have 2 components, CF(1) - the catalytic core - and CF(0) - the membrane proton channel. CF(1) has five subunits: alpha(3), beta(3), gamma(1), delta(1), epsilon(1). CF(0) has four main subunits: a, b, b' and c.

It is found in the plastid. The protein localises to the chloroplast thylakoid membrane. The catalysed reaction is ATP + H2O + 4 H(+)(in) = ADP + phosphate + 5 H(+)(out). Produces ATP from ADP in the presence of a proton gradient across the membrane. The alpha chain is a regulatory subunit. The sequence is that of ATP synthase subunit alpha, chloroplastic from Oenothera glazioviana (Large-flowered evening primrose).